The primary structure comprises 309 residues: Glutaminase (309 aa).

Substrate is bound by residues Ser64, Asn114, Glu160, Asn167, Tyr191, Tyr243, and Val261.

It belongs to the glutaminase family. Homotetramer.

The enzyme catalyses L-glutamine + H2O = L-glutamate + NH4(+). The chain is Glutaminase from Azorhizobium caulinodans (strain ATCC 43989 / DSM 5975 / JCM 20966 / LMG 6465 / NBRC 14845 / NCIMB 13405 / ORS 571).